The following is a 216-amino-acid chain: Thiopurine S-methyltransferase (216 aa).

The S-adenosyl-L-methionine site is built by Trp-11, Leu-46, Glu-67, and Arg-122.

The protein belongs to the class I-like SAM-binding methyltransferase superfamily. TPMT family.

The protein resides in the cytoplasm. It catalyses the reaction S-adenosyl-L-methionine + a thiopurine = S-adenosyl-L-homocysteine + a thiopurine S-methylether.. This chain is Thiopurine S-methyltransferase, found in Vibrio campbellii (strain ATCC BAA-1116).